The following is a 239-amino-acid chain: MFQRLNKMFVGEVTTSSSQEPEFSEKEDDEWILVDFIDTCPGFSAEEEEEDEDIGEESSAEHTSVFSCLPASLECLTDTSDSCFLQFESCPMEESWFITPPPCFTAGGLTTIKVETSPMENLLIEHPSMSVYAVHNSCPGLSEASCGNDEYNSSGPRMEAQSEMGKHIHCCVAALAAQATFLEQPKSFRPSQWIKGHSERQSLNRNGLRRQNLTRDCHTRQMKHSGWVVHQPCPRQYNY.

The LIR motif lies at 25 to 37 (EKEDDEWILVDFI).

As to quaternary structure, interacts with p53/TP53 and HIPK2. Interacts with PRKCG, GABARAP, GABARAPL1, GABARAPL2, MAP1LC3A, MAP1LC3B and MAP1LC3C. As to expression, ubiquitously expressed with highest levels in the thymus.

Its subcellular location is the cytoplasm. It is found in the cytosol. The protein localises to the nucleus. The protein resides in the PML body. It localises to the cytoplasmic vesicle. Its subcellular location is the autophagosome. In terms of biological role, antiproliferative and proapoptotic protein involved in cell stress response which acts as a dual regulator of transcription and autophagy. Acts as a positive regulator of autophagy. In response to cellular stress or activation of autophagy, relocates to autophagosomes where it interacts with autophagosome-associated proteins GABARAP, GABARAPL1/L2, MAP1LC3A/B/C and regulates autophagy. Acts as an antioxidant and plays a major role in p53/TP53-driven oxidative stress response. Possesses both a p53/TP53-independent intracellular reactive oxygen species (ROS) regulatory function and a p53/TP53-dependent transcription regulatory function. Positively regulates p53/TP53 and p73/TP73 and stimulates their capacity to induce apoptosis and regulate cell cycle. In response to double-strand DNA breaks, promotes p53/TP53 phosphorylation on 'Ser-46' and subsequent apoptosis. Acts as a tumor suppressor by inducing cell death by an autophagy and caspase-dependent mechanism. Can reduce cell migration by regulating the expression of SPARC. The sequence is that of Tumor protein p53-inducible nuclear protein 1 (Trp53inp1) from Mus musculus (Mouse).